A 309-amino-acid chain; its full sequence is Olfactory receptor 10J5 (309 aa).

Topologically, residues 1–25 are extracellular; that stretch reads MKRKNFTEVSEFIFLGFSSFGKHQI. N-linked (GlcNAc...) asparagine glycosylation occurs at Asn5. Residues 26–46 traverse the membrane as a helical segment; that stretch reads TLFVVFLTVYILTLVANIIIV. The Cytoplasmic portion of the chain corresponds to 47 to 54; that stretch reads TIICIDHH. A helical membrane pass occupies residues 55–75; sequence LHTPMYFFLSMLASSETVYTL. The Extracellular segment spans residues 76 to 99; sequence VIVPRMLLSLIFHNQPISLAGCAT. The cysteines at positions 97 and 188 are disulfide-linked. A helical membrane pass occupies residues 100–120; that stretch reads QMFFFVILATNNCFLLTAMGY. At 121–139 the chain is on the cytoplasmic side; that stretch reads DRYVAICRPLRYTVIMSKG. The helical transmembrane segment at 140-160 threads the bilayer; it reads LCAQLVCGSFGIGLTMAVLHV. The Extracellular portion of the chain corresponds to 161–196; sequence TAMFNLPFCGTVVDHFFCDIYPVMKLSCIDTTINEI. A helical transmembrane segment spans residues 197–216; sequence INYGVSSFVIFVPIGLIFIS. Topologically, residues 217–236 are cytoplasmic; that stretch reads YVLVISSILQIASAEGRKKT. The chain crosses the membrane as a helical span at residues 237–257; that stretch reads FATCVSHLTVVIVHCGCASIA. Residues 258-270 are Extracellular-facing; sequence YLKPKSESSIEKD. A helical transmembrane segment spans residues 271–291; sequence LVLSVTYTIITPLLNPVVYSL. Topologically, residues 292–309 are cytoplasmic; sequence RNKEVKDALCRVVGRNIS.

It belongs to the G-protein coupled receptor 1 family. As to expression, expressed in both the aorta, the coronary artery and umbilical vein endothelial cells (HUVECs) (at protein level).

The protein localises to the cell membrane. In terms of biological role, olfactory receptor. Activated by the synthetic floral odorant, lyral, and by alpha-cedrene, a sesquiterpene constituent of cedarwood oil. Its activation increases intracellular Ca(2+). Acts as a key regulator of myogenesis through its actions on cell migration and adhesion by activating the Ca(2+)-dependent AKT signal transduction pathway. Also acts as a regulator of angiogenesis. Moreover, plays a role in the regulation of lipid accumulation in hepatocytes via the cAMP-PKA pathway. May be involved in sperm chemotaxis and motility. This Homo sapiens (Human) protein is Olfactory receptor 10J5.